Here is a 503-residue protein sequence, read N- to C-terminus: Cytochrome P450 71B6 (503 aa).

The helical transmembrane segment at 10–30 (TELLPWLLLLLIPPLLIFFLL) threads the bilayer. Cys446 contributes to the heme binding site.

Belongs to the cytochrome P450 family. The cofactor is heme.

Its subcellular location is the membrane. This Arabidopsis thaliana (Mouse-ear cress) protein is Cytochrome P450 71B6 (CYP71B6).